We begin with the raw amino-acid sequence, 264 residues long: Undecaprenyl-diphosphatase (264 aa).

8 helical membrane passes run 1-21 (MDIV…FLPI), 39-59 (QGLA…VFYF), 83-103 (STLV…GLAF), 113-133 (SGIV…LADK), 143-163 (VTIK…IPGV), 181-201 (VGSA…AGGL), 220-240 (LAAL…MSII), and 244-264 (SMTP…FIFV).

The protein belongs to the UppP family.

Its subcellular location is the cell inner membrane. The catalysed reaction is di-trans,octa-cis-undecaprenyl diphosphate + H2O = di-trans,octa-cis-undecaprenyl phosphate + phosphate + H(+). Catalyzes the dephosphorylation of undecaprenyl diphosphate (UPP). Confers resistance to bacitracin. This is Undecaprenyl-diphosphatase from Campylobacter curvus (strain 525.92).